We begin with the raw amino-acid sequence, 345 residues long: Src kinase-associated phosphoprotein 1 (345 aa).

Residues 109–212 form the PH domain; the sequence is KIFKQGYLER…WVEQIQFLVK (104 aa). A disordered region spans residues 226 to 274; the sequence is ETYDDIESTESSPVVGLTNDSENSLQEDDVYESIPGDEETEESEDENYE. Positions 250-272 are enriched in acidic residues; the sequence is LQEDDVYESIPGDEETEESEDEN. An SH3 domain is found at 283–344; sequence FYGDYYQGLW…PKDYLTLAFD (62 aa).

Belongs to the SKAP family. In terms of assembly, homodimer. Phosphorylated on tyrosines.

It is found in the cytoplasm. The protein resides in the nucleus. Its subcellular location is the cell membrane. Positively regulates T-cell receptor signaling. Required for optimal conjugation between T-cells and antigen-presenting cells. The chain is Src kinase-associated phosphoprotein 1 (skap1) from Xenopus tropicalis (Western clawed frog).